A 569-amino-acid polypeptide reads, in one-letter code: Oxygen-dependent choline dehydrogenase (569 aa).

Residue Asp9–Glu38 participates in FAD binding. His475 acts as the Proton acceptor in catalysis.

The protein belongs to the GMC oxidoreductase family. FAD is required as a cofactor.

The enzyme catalyses choline + A = betaine aldehyde + AH2. It catalyses the reaction betaine aldehyde + NAD(+) + H2O = glycine betaine + NADH + 2 H(+). The protein operates within amine and polyamine biosynthesis; betaine biosynthesis via choline pathway; betaine aldehyde from choline (cytochrome c reductase route): step 1/1. Functionally, involved in the biosynthesis of the osmoprotectant glycine betaine. Catalyzes the oxidation of choline to betaine aldehyde and betaine aldehyde to glycine betaine at the same rate. The polypeptide is Oxygen-dependent choline dehydrogenase (Staphylococcus aureus (strain COL)).